The following is a 314-amino-acid chain: Putative 4-hydroxy-2-oxoglutarate aldolase, mitochondrial (314 aa).

50–51 (TN) provides a ligand contact to substrate. The active-site Schiff-base intermediate with substrate is the lysine 171.

This sequence belongs to the DapA family.

It catalyses the reaction (4S)-4-hydroxy-2-oxoglutarate = glyoxylate + pyruvate. It carries out the reaction (4R)-4-hydroxy-2-oxoglutarate = glyoxylate + pyruvate. Its function is as follows. May catalyze the final step in the metabolic pathway of hydroxyproline. This Coccidioides immitis (strain RS) (Valley fever fungus) protein is Putative 4-hydroxy-2-oxoglutarate aldolase, mitochondrial.